We begin with the raw amino-acid sequence, 98 residues long: Large ribosomal subunit protein uL23 (98 aa).

This sequence belongs to the universal ribosomal protein uL23 family. As to quaternary structure, part of the 50S ribosomal subunit. Contacts protein L29, and trigger factor when it is bound to the ribosome.

Its function is as follows. One of the early assembly proteins it binds 23S rRNA. One of the proteins that surrounds the polypeptide exit tunnel on the outside of the ribosome. Forms the main docking site for trigger factor binding to the ribosome. The polypeptide is Large ribosomal subunit protein uL23 (Acidothermus cellulolyticus (strain ATCC 43068 / DSM 8971 / 11B)).